The sequence spans 141 residues: Nucleoside diphosphate kinase (141 aa).

Residues Lys11, Phe59, Arg87, Thr93, Arg104, and Asn114 each contribute to the ATP site. Catalysis depends on His117, which acts as the Pros-phosphohistidine intermediate.

The protein belongs to the NDK family. In terms of assembly, homotetramer. Requires Mg(2+) as cofactor.

The protein resides in the cytoplasm. It carries out the reaction a 2'-deoxyribonucleoside 5'-diphosphate + ATP = a 2'-deoxyribonucleoside 5'-triphosphate + ADP. It catalyses the reaction a ribonucleoside 5'-diphosphate + ATP = a ribonucleoside 5'-triphosphate + ADP. In terms of biological role, major role in the synthesis of nucleoside triphosphates other than ATP. The ATP gamma phosphate is transferred to the NDP beta phosphate via a ping-pong mechanism, using a phosphorylated active-site intermediate. The sequence is that of Nucleoside diphosphate kinase from Vibrio campbellii (strain ATCC BAA-1116).